A 124-amino-acid polypeptide reads, in one-letter code: MSTINQLVRNPRKKKVIKSGVPALDSCPQKRGVCTRVYTTTPKKPNSALRKVARVRLTNANEVTTYIGGEGHNLQEHSVILIRGGRVKDLPGVRYHTVRGALDTTGVDSRMQGRSKYGTKKPKK.

Residue D89 is modified to 3-methylthioaspartic acid. The segment at 105–124 (TGVDSRMQGRSKYGTKKPKK) is disordered.

It belongs to the universal ribosomal protein uS12 family. In terms of assembly, part of the 30S ribosomal subunit. Contacts proteins S8 and S17. May interact with IF1 in the 30S initiation complex.

With S4 and S5 plays an important role in translational accuracy. In terms of biological role, interacts with and stabilizes bases of the 16S rRNA that are involved in tRNA selection in the A site and with the mRNA backbone. Located at the interface of the 30S and 50S subunits, it traverses the body of the 30S subunit contacting proteins on the other side and probably holding the rRNA structure together. The combined cluster of proteins S8, S12 and S17 appears to hold together the shoulder and platform of the 30S subunit. The sequence is that of Small ribosomal subunit protein uS12 from Vesicomyosocius okutanii subsp. Calyptogena okutanii (strain HA).